A 287-amino-acid chain; its full sequence is Pyridoxal kinase PdxY (287 aa).

Substrate is bound by residues Ser-10 and 45–46 (TQ). ATP contacts are provided by residues Asp-112, Ala-144, Glu-149, Lys-182, and 209-212 (RPLV). Asp-224 lines the substrate pocket.

The protein belongs to the pyridoxine kinase family. PdxY subfamily. As to quaternary structure, homodimer. Mg(2+) serves as cofactor.

The catalysed reaction is pyridoxal + ATP = pyridoxal 5'-phosphate + ADP + H(+). Its pathway is cofactor metabolism; pyridoxal 5'-phosphate salvage; pyridoxal 5'-phosphate from pyridoxal: step 1/1. Pyridoxal kinase involved in the salvage pathway of pyridoxal 5'-phosphate (PLP). Catalyzes the phosphorylation of pyridoxal to PLP. This chain is Pyridoxal kinase PdxY, found in Shigella sonnei (strain Ss046).